The chain runs to 483 residues: ATP synthase subunit beta (483 aa).

Residue 162–169 coordinates ATP; that stretch reads GGAGVGKT.

This sequence belongs to the ATPase alpha/beta chains family. F-type ATPases have 2 components, CF(1) - the catalytic core - and CF(0) - the membrane proton channel. CF(1) has five subunits: alpha(3), beta(3), gamma(1), delta(1), epsilon(1). CF(0) has four main subunits: a(1), b(1), b'(1) and c(9-12).

Its subcellular location is the cellular thylakoid membrane. It catalyses the reaction ATP + H2O + 4 H(+)(in) = ADP + phosphate + 5 H(+)(out). Its function is as follows. Produces ATP from ADP in the presence of a proton gradient across the membrane. The catalytic sites are hosted primarily by the beta subunits. The protein is ATP synthase subunit beta of Rippkaea orientalis (strain PCC 8801 / RF-1) (Cyanothece sp. (strain PCC 8801)).